We begin with the raw amino-acid sequence, 514 residues long: Pleiotropic regulator 1 (514 aa).

At M1 the chain carries N-acetylmethionine. Phosphoserine is present on S119. Positions 135-160 (KADANRTAPSGSEYRHPGASDRPQPT) are disordered. S201 is modified (phosphoserine). WD repeat units lie at residues 202 to 241 (GHLGWVRCIAVEPGNQWFVTGSADRTIKIWDLASGKLKLS), 244 to 283 (GHISTVRGVIVSTRSPYLFSCGEDKQVKCWDLEYNKVIRH), 286 to 325 (GHLSAVYGLDLHPTIDVLVTCSRDSTARIWDVRTKASVHT), 328 to 367 (GHTNAVATVRCQAAEPQIITGSHDTTIRLWDLVAGKTRVT), 370 to 410 (NHKK…QNLS), 411 to 449 (GHNAIINTLTVNSDGVLVSGADNGTMHLWDWRTGYNFQR), and 460 to 499 (DSESGIFACAFDQSESRLLTAEADKTIKVYREDDTATEET). Phosphoserine is present on S391.

It belongs to the WD repeat PRL1/PRL2 family. As to quaternary structure, identified in the spliceosome C complex. Component of the PRP19-CDC5L splicing complex composed of a core complex comprising a homotetramer of PRPF19, CDC5L, PLRG1 and BCAS2, and at least three less stably associated proteins CTNNBL1, CWC15 and HSPA8. Interacts (via its WD40 repeat domain) directly with CDC5L (via its C-terminal); the interaction is required for mRNA splicing but not for spliceosome assembly. Component of the minor spliceosome, which splices U12-type introns. Within this complex, interacts with CRIPT. Also interacts directly in the complex with BCAS2 and PRPF19. Interacts with USB1.

It localises to the nucleus. The protein localises to the nucleus speckle. Its function is as follows. Involved in pre-mRNA splicing as component of the spliceosome. Component of the PRP19-CDC5L complex that forms an integral part of the spliceosome and is required for activating pre-mRNA splicing. As a component of the minor spliceosome, involved in the splicing of U12-type introns in pre-mRNAs. The chain is Pleiotropic regulator 1 (PLRG1) from Homo sapiens (Human).